Here is a 253-residue protein sequence, read N- to C-terminus: Ubiquinone/menaquinone biosynthesis C-methyltransferase UbiE (253 aa).

Residues Thr-76, Asp-97, 125-126, and Ser-142 contribute to the S-adenosyl-L-methionine site; that span reads NA.

The protein belongs to the class I-like SAM-binding methyltransferase superfamily. MenG/UbiE family.

The catalysed reaction is a 2-demethylmenaquinol + S-adenosyl-L-methionine = a menaquinol + S-adenosyl-L-homocysteine + H(+). It catalyses the reaction a 2-methoxy-6-(all-trans-polyprenyl)benzene-1,4-diol + S-adenosyl-L-methionine = a 5-methoxy-2-methyl-3-(all-trans-polyprenyl)benzene-1,4-diol + S-adenosyl-L-homocysteine + H(+). It functions in the pathway quinol/quinone metabolism; menaquinone biosynthesis; menaquinol from 1,4-dihydroxy-2-naphthoate: step 2/2. The protein operates within cofactor biosynthesis; ubiquinone biosynthesis. Methyltransferase required for the conversion of demethylmenaquinol (DMKH2) to menaquinol (MKH2) and the conversion of 2-polyprenyl-6-methoxy-1,4-benzoquinol (DDMQH2) to 2-polyprenyl-3-methyl-6-methoxy-1,4-benzoquinol (DMQH2). The polypeptide is Ubiquinone/menaquinone biosynthesis C-methyltransferase UbiE (Xylella fastidiosa (strain M12)).